The sequence spans 190 residues: MDKNYIKAAIEAILFAWSDPISSSELSNILDIKVTETKEIMKEMIDEFNFHKRGIQIIQMNDHYQMSTRAEYHEILQKLFEPKQNKGLTQASLETLAIIAYRQPITKTEIESVRGVKCDKAISTLFEKNLIEDRGRLEKTGRPILFGTTLHFLKNFGLKSLEDLPKITEIDQANEEELIKDIYNQQLKGR.

Belongs to the ScpB family. As to quaternary structure, homodimer. Homodimerization may be required to stabilize the binding of ScpA to the Smc head domains. Component of a cohesin-like complex composed of ScpA, ScpB and the Smc homodimer, in which ScpA and ScpB bind to the head domain of Smc. The presence of the three proteins is required for the association of the complex with DNA.

The protein localises to the cytoplasm. In terms of biological role, participates in chromosomal partition during cell division. May act via the formation of a condensin-like complex containing Smc and ScpA that pull DNA away from mid-cell into both cell halves. This chain is Segregation and condensation protein B, found in Alkaliphilus metalliredigens (strain QYMF).